A 567-amino-acid chain; its full sequence is Geranylgeranyl transferase type-2 subunit alpha (567 aa).

PFTA repeat units follow at residues 44–78, 88–122, 124–158, 159–193, 207–241, and 363–397; these read LDESVLELTSQILGANPDFATLWNCRREVLQQLEV, LVKAELGFLESCLRVNPKSYGTWHHRCWLLSRLPE, NWARELELCARFLEVDERNFHCWDYRRFVAAQAAV, PPAEELAFTDSLITRNFSNYSSWHYRSCLLPQLHP, VLLKELELVQNAFFTDPNDQSAWFYHRWLLGRADP, and VLQSELESCKELQELEPENKWCLLTIILLMRALDP. Ser-98 carries the post-translational modification Phosphoserine. 5 LRR repeats span residues 442–463, 464–486, 487–508, 509–530, and 534–555; these read EVRVLHLGHKDLTVLCHLEQLL, LVTHLDLSHNRLRALPPALAALR, CLEVLQANDNAIESLDGVTNLP, RLQELILCNNRLQQPAVLQPLT, and RLTLLNLQGNPLCQAEGSSEHL.

This sequence belongs to the protein prenyltransferase subunit alpha family. In terms of assembly, heterotrimer composed of RABGGTA, RABGGTB and CHM; within this trimer, RABGGTA and RABGGTB form the catalytic component B, while CHM (component A) mediates peptide substrate binding. The Rab GGTase dimer (RGGT) interacts with CHM (component A) prior to Rab protein binding; the association is stabilized by geranylgeranyl pyrophosphate (GGpp). The CHM:RGGT:Rab complex is destabilized by GGpp. Interacts with non-phosphorylated form of RAB8A; phosphorylation of RAB8A at 'Thr-72' disrupts this interaction.

It carries out the reaction geranylgeranyl diphosphate + L-cysteinyl-[protein] = S-geranylgeranyl-L-cysteinyl-[protein] + diphosphate. With respect to regulation, the enzymatic reaction requires the aid of a Rab escort protein (also called component A), such as CHM. In terms of biological role, catalyzes the transfer of a geranylgeranyl moiety from geranylgeranyl diphosphate to both cysteines of Rab proteins with the C-terminal sequence -XXCC, -XCXC and -CCXX, such as RAB1A, RAB3A, RAB5A and RAB7A. This chain is Geranylgeranyl transferase type-2 subunit alpha (RABGGTA), found in Bos taurus (Bovine).